The sequence spans 269 residues: MEEDGLNNRNWGYYEPSQFRPNLGFQLIPSILDRNEKPFLSPHSQNLNFITPSNVYGGGSSSVVSYPRDYTVSDAPFMSYSWLNQHKDSKFFSNVPEVSRMTQSMQLLQPEVVTEVDESVKRRHCSGGQRGGVPKVKKEKKLKDNNMPRVQRERSPLLRKCIEMVINGVSMDIGGLPVPVCSCTGMPQQCYRWGCGGWQSACCTTNVSMYPLPVNTKRRGARIAGRKMSQGAFRKVLEKLSSDGFDFSNPIDLKSHWAKHGTNKFVTIR.

The protein belongs to the BBR/BPC family. Expressed in seedlings, leaves and pistils. Detected in the base of flowers and tips of carpels, in petal vasculature, in anthers, in young rosette, in the lateral and primary roots, and in the gynobasal portion of the ovule.

Its subcellular location is the nucleus. Transcriptional regulator that specifically binds to GA-rich elements (GAGA-repeats) present in regulatory sequences of genes involved in developmental processes. In Arabidopsis thaliana (Mouse-ear cress), this protein is Protein BASIC PENTACYSTEINE3 (BPC3).